The chain runs to 159 residues: Phosphopantetheine adenylyltransferase (159 aa).

Threonine 10 lines the substrate pocket. Residues 10 to 11 and histidine 18 each bind ATP; that span reads TF. The substrate site is built by lysine 42, methionine 74, and arginine 88. ATP-binding positions include 89-91, glutamate 99, and 124-130; these read GLR and WSFISSS.

Belongs to the bacterial CoaD family. As to quaternary structure, homohexamer. Requires Mg(2+) as cofactor.

It is found in the cytoplasm. It carries out the reaction (R)-4'-phosphopantetheine + ATP + H(+) = 3'-dephospho-CoA + diphosphate. It participates in cofactor biosynthesis; coenzyme A biosynthesis; CoA from (R)-pantothenate: step 4/5. In terms of biological role, reversibly transfers an adenylyl group from ATP to 4'-phosphopantetheine, yielding dephospho-CoA (dPCoA) and pyrophosphate. The chain is Phosphopantetheine adenylyltransferase from Salmonella choleraesuis (strain SC-B67).